The primary structure comprises 60 residues: UPF0434 protein Daci_3569 (60 aa).

The protein belongs to the UPF0434 family.

This Delftia acidovorans (strain DSM 14801 / SPH-1) protein is UPF0434 protein Daci_3569.